The chain runs to 245 residues: Bax inhibitor 1 (245 aa).

At 1–30 (MADTANYINDRFQTFMNGLGDRYEPYVREH) the chain is on the cytoplasmic side. A helical membrane pass occupies residues 31–51 (LSKVYMVLGSTAAATAMGAML). Over 52–55 (QMRD) the chain is Lumenal. The helical transmembrane segment at 56–76 (FLDLGVLAAVATLVLVLGLHF) threads the bilayer. At 77-88 (YKDDGKNYYTRL) the chain is on the cytoplasmic side. The helical transmembrane segment at 89–109 (GMLYAFGFCSGQTLGPLLGYI) threads the bilayer. Topologically, residues 110-115 (CSINPA) are lumenal. Residues 116–136 (IILSALTGTFVTFISLSLSAL) form a helical membrane-spanning segment. Residues 137-142 (LAEQGK) are Cytoplasmic-facing. Residues 143–163 (YLYLGGMLVSVINTMALLSLF) form a helical membrane-spanning segment. The Lumenal portion of the chain corresponds to 164–169 (NMVFKS). Residues 170-190 (YFVQVTQLYVGVFVMAAFIVY) form a helical membrane-spanning segment. The Cytoplasmic segment spans residues 191–245 (DTQNIVEKCRNGNRDVVQHALDLFFDVLSMFRRLLIILTQKEERKQNERRQNKTK).

The protein belongs to the BI1 family.

The protein localises to the endoplasmic reticulum membrane. Suppressor of apoptosis. Modulates unfolded protein response signaling. Negatively regulates autophagy and autophagosome formation, especially during periods of nutrient deprivation, and reduces cell survival during starvation. The chain is Bax inhibitor 1 from Drosophila melanogaster (Fruit fly).